A 368-amino-acid polypeptide reads, in one-letter code: Isocitrate dehydrogenase [NAD] subunit 2, mitochondrial (368 aa).

Residues 1-14 (MFRQSIVKQSCRFL) constitute a mitochondrion transit peptide. 4 residues coordinate substrate: Arg118, Arg128, Arg149, and Asp236. Residues Asp236, Asp262, and Asp266 each coordinate Mg(2+).

Belongs to the isocitrate and isopropylmalate dehydrogenases family. In terms of assembly, octamer of two non-identical subunits IDH1 and IDH2. The cofactor is Mg(2+). Mn(2+) serves as cofactor.

The protein localises to the mitochondrion. The catalysed reaction is D-threo-isocitrate + NAD(+) = 2-oxoglutarate + CO2 + NADH. Its function is as follows. Performs an essential role in the oxidative function of the citric acid cycle. In Kluyveromyces lactis (strain ATCC 8585 / CBS 2359 / DSM 70799 / NBRC 1267 / NRRL Y-1140 / WM37) (Yeast), this protein is Isocitrate dehydrogenase [NAD] subunit 2, mitochondrial (IDH2).